An 88-amino-acid polypeptide reads, in one-letter code: Small ribosomal subunit protein bS16c (88 aa).

Belongs to the bacterial ribosomal protein bS16 family.

The protein localises to the plastid. The protein resides in the chloroplast. The protein is Small ribosomal subunit protein bS16c of Helianthus annuus (Common sunflower).